The chain runs to 1360 residues: DNA-directed RNA polymerase subunit beta (1360 aa).

Belongs to the RNA polymerase beta chain family. As to quaternary structure, the RNAP catalytic core consists of 2 alpha, 1 beta, 1 beta' and 1 omega subunit. When a sigma factor is associated with the core the holoenzyme is formed, which can initiate transcription.

It catalyses the reaction RNA(n) + a ribonucleoside 5'-triphosphate = RNA(n+1) + diphosphate. DNA-dependent RNA polymerase catalyzes the transcription of DNA into RNA using the four ribonucleoside triphosphates as substrates. In Caulobacter sp. (strain K31), this protein is DNA-directed RNA polymerase subunit beta.